Consider the following 31-residue polypeptide: Cyclotide cter-C (31 aa).

The cyclopeptide (Gly-Asp) cross-link spans 1–31 (GVPCAESCVWIPCTVTALLGCSCKDKVCYLD). 3 cysteine pairs are disulfide-bonded: Cys-4-Cys-21, Cys-8-Cys-23, and Cys-13-Cys-28.

Contains 3 disulfide bonds. In terms of processing, this is a cyclic peptide.

Functionally, probably participates in a plant defense mechanism. This Clitoria ternatea (Butterfly pea) protein is Cyclotide cter-C.